Consider the following 98-residue polypeptide: NADH-ubiquinone oxidoreductase chain 4L (98 aa).

3 helical membrane passes run 1-21 (MTPVHFSFTSAFILGLMGLAF), 29-49 (ALLCLEGMMLSLFIALSLWAL), and 58-78 (VAPMLLLAFSACEASAGLALL).

Belongs to the complex I subunit 4L family.

It is found in the mitochondrion membrane. The enzyme catalyses a ubiquinone + NADH + 5 H(+)(in) = a ubiquinol + NAD(+) + 4 H(+)(out). Functionally, core subunit of the mitochondrial membrane respiratory chain NADH dehydrogenase (Complex I) which catalyzes electron transfer from NADH through the respiratory chain, using ubiquinone as an electron acceptor. Part of the enzyme membrane arm which is embedded in the lipid bilayer and involved in proton translocation. This chain is NADH-ubiquinone oxidoreductase chain 4L (MT-ND4L), found in Salmo salar (Atlantic salmon).